The chain runs to 327 residues: Phenylalanine--tRNA ligase alpha subunit (327 aa).

Glu-252 lines the Mg(2+) pocket.

The protein belongs to the class-II aminoacyl-tRNA synthetase family. Phe-tRNA synthetase alpha subunit type 1 subfamily. Tetramer of two alpha and two beta subunits. The cofactor is Mg(2+).

The protein resides in the cytoplasm. It catalyses the reaction tRNA(Phe) + L-phenylalanine + ATP = L-phenylalanyl-tRNA(Phe) + AMP + diphosphate + H(+). This Shewanella baltica (strain OS185) protein is Phenylalanine--tRNA ligase alpha subunit.